The following is a 465-amino-acid chain: MIGAGLAGSEAAWQLAEAGIDVVLHEMRPDRMTEAHRTATPAELVCSNSFRSDDAANNAVGLLHAEMRRLGSLIMRAADANQVPAGGALAVDRDSFAAAVATALQGHPRIELRRGEITGLPPAEWANVIIATGPLTSQPLADAIRALTDESALAFFDAIAPIVHKDTIDMSKAWFQSRYDKVGPGGTGADYINCPMTREQYDAFVAALLAGEKTDFKDWETNTPYFDGCLPIEVMAERGHETLRHGPMKPVGLTNPHDPTVKPYAIVQLRQDNKLGTLYNMVGFQTKLKYGPQQQIFRTIPGLENAEFARLGGLHRNTFLNSPKLLDQQLRLRAQPRLRFAGQMTGCEGYVESASIGLIAGLYAAAEARGASLAAPPPTTALGALLGHITGGHIETIDGATRSFQPMNINFGLFPPLAAAPTKKPDGTRLKGNEKTVAKKQAMSARALADLDRWIAEHLRVAAAA.

FAD is bound at residue 3–8 (GAGLAG).

The protein belongs to the MnmG family. TrmFO subfamily. It depends on FAD as a cofactor.

Its subcellular location is the cytoplasm. It catalyses the reaction uridine(54) in tRNA + (6R)-5,10-methylene-5,6,7,8-tetrahydrofolate + NADH + H(+) = 5-methyluridine(54) in tRNA + (6S)-5,6,7,8-tetrahydrofolate + NAD(+). It carries out the reaction uridine(54) in tRNA + (6R)-5,10-methylene-5,6,7,8-tetrahydrofolate + NADPH + H(+) = 5-methyluridine(54) in tRNA + (6S)-5,6,7,8-tetrahydrofolate + NADP(+). Functionally, catalyzes the folate-dependent formation of 5-methyl-uridine at position 54 (M-5-U54) in all tRNAs. This is Methylenetetrahydrofolate--tRNA-(uracil-5-)-methyltransferase TrmFO from Bradyrhizobium sp. (strain ORS 278).